A 409-amino-acid chain; its full sequence is Translation initiation factor 2 subunit gamma (409 aa).

The tr-type G domain maps to 7–203; it reads QPEVNIGLVG…AIEREIPTPE (197 aa). Residues 16 to 23 form a G1 region; it reads GHVDHGKT. 4 residues coordinate Mg(2+): aspartate 19, threonine 23, glycine 44, and serine 46. 19–24 serves as a coordination point for GTP; it reads DHGKTT. Residues 44-48 form a G2 region; the sequence is GISIR. The G3 stretch occupies residues 90-93; it reads DAPG. GTP-binding positions include 146-149 and 181-183; these read NKID and SAQ. A G4 region spans residues 146 to 149; that stretch reads NKID. Positions 181–183 are G5; the sequence is SAQ.

This sequence belongs to the TRAFAC class translation factor GTPase superfamily. Classic translation factor GTPase family. EIF2G subfamily. Heterotrimer composed of an alpha, a beta and a gamma chain. Mg(2+) serves as cofactor.

The enzyme catalyses GTP + H2O = GDP + phosphate + H(+). Functionally, eIF-2 functions in the early steps of protein synthesis by forming a ternary complex with GTP and initiator tRNA. The protein is Translation initiation factor 2 subunit gamma of Haloquadratum walsbyi (strain DSM 16790 / HBSQ001).